The primary structure comprises 722 residues: Peroxisomal bifunctional enzyme (722 aa).

Residues 1-281 (MAEYLRLPHS…FAEKSANKWS (281 aa)) are enoyl-CoA hydratase / isomerase. Blocked amino end (Ala) is present on Ala2. Lys38 carries the N6-succinyllysine modification. Residue Gly100 participates in substrate binding. Lys173 is modified (N6-acetyllysine; alternate). Lys173 is subject to N6-succinyllysine; alternate. Lys182 is subject to N6-succinyllysine. N6-acetyllysine; alternate is present on residues Lys190 and Lys218. 2 positions are modified to N6-succinyllysine; alternate: Lys190 and Lys218. N6-succinyllysine is present on Lys241. Lys249 is subject to N6-acetyllysine. Lys253 is subject to N6-succinyllysine. Lys275 bears the N6-acetyllysine; alternate mark. At Lys275 the chain carries N6-succinyllysine; alternate. Residues Lys279, Lys289, and Lys330 each carry the N6-succinyllysine modification. The tract at residues 282-571 (TPSGASWKTA…DMLCEAGRFG (290 aa)) is 3-hydroxyacyl-CoA dehydrogenase. Residues Lys345, Lys359, and Lys463 each carry the N6-acetyllysine modification. Lys531 bears the N6-succinyllysine mark. The residue at position 547 (Thr547) is a Phosphothreonine. Lys576 is subject to N6-succinyllysine. N6-acetyllysine; alternate is present on residues Lys583, Lys590, and Lys709. An N6-succinyllysine; alternate mark is found at Lys583, Lys590, and Lys709. The Microbody targeting signal signature appears at 720 to 722 (SKL). Lys721 carries the post-translational modification N6-succinyllysine.

This sequence in the N-terminal section; belongs to the enoyl-CoA hydratase/isomerase family. The protein in the C-terminal section; belongs to the 3-hydroxyacyl-CoA dehydrogenase family. In terms of assembly, monomer. In terms of processing, acetylated, leading to enhanced enzyme activity. Acetylation is enhanced by up to 80% after treatment either with trichostin A (TCA) or with nicotinamide (NAM) with highest increase on Lys-345. Acetylation and enzyme activity increased by about 1.5% on addition of fatty acids.

It localises to the peroxisome. It carries out the reaction a (3S)-3-hydroxyacyl-CoA = a (2E)-enoyl-CoA + H2O. The enzyme catalyses a 4-saturated-(3S)-3-hydroxyacyl-CoA = a (3E)-enoyl-CoA + H2O. The catalysed reaction is a (3Z)-enoyl-CoA = a 4-saturated (2E)-enoyl-CoA. It catalyses the reaction a (3E)-enoyl-CoA = a 4-saturated (2E)-enoyl-CoA. It carries out the reaction a (3S)-3-hydroxyacyl-CoA + NAD(+) = a 3-oxoacyl-CoA + NADH + H(+). The enzyme catalyses (2S,3S)-3-hydroxy-2-methylbutanoyl-CoA = (2E)-2-methylbut-2-enoyl-CoA + H2O. The catalysed reaction is (3E,5Z)-tetradecadienoyl-CoA = (2E,5Z)-tetradecadienoyl-CoA. It catalyses the reaction (3E,5Z)-octadienoyl-CoA = (2E,5Z)-octadienoyl-CoA. It carries out the reaction (3S)-hydroxydecanoyl-CoA + NAD(+) = 3-oxodecanoyl-CoA + NADH + H(+). The enzyme catalyses (3E)-decenoyl-CoA = (2E)-decenoyl-CoA. The catalysed reaction is (3Z)-hexenoyl-CoA = (2E)-hexenoyl-CoA. It catalyses the reaction (3E)-hexenoyl-CoA = (2E)-hexenoyl-CoA. It carries out the reaction (3S)-hydroxydecanoyl-CoA = (2E)-decenoyl-CoA + H2O. The enzyme catalyses (3S)-hydroxyhexanoyl-CoA = (2E)-hexenoyl-CoA + H2O. The catalysed reaction is (3S)-hydroxyhexadecanoyl-CoA + NAD(+) = 3-oxohexadecanoyl-CoA + NADH + H(+). It catalyses the reaction (3S)-hydroxyhexadecanoyl-CoA = (2E)-hexadecenoyl-CoA + H2O. It carries out the reaction (2E)-hexadecenedioyl-CoA + H2O = (3S)-hydroxyhexadecanedioyl-CoA. The enzyme catalyses (3S)-hydroxyhexadecanedioyl-CoA + NAD(+) = 3-oxohexadecanedioyl-CoA + NADH + H(+). Its pathway is lipid metabolism; fatty acid beta-oxidation. Enzyme activity enhanced by acetylation. Its function is as follows. Peroxisomal trifunctional enzyme possessing 2-enoyl-CoA hydratase, 3-hydroxyacyl-CoA dehydrogenase, and delta 3, delta 2-enoyl-CoA isomerase activities. Catalyzes two of the four reactions of the long chain fatty acids peroxisomal beta-oxidation pathway. Can also use branched-chain fatty acids such as 2-methyl-2E-butenoyl-CoA as a substrate, which is hydrated into (2S,3S)-3-hydroxy-2-methylbutanoyl-CoA. Optimal isomerase for 2,5 double bonds into 3,5 form isomerization in a range of enoyl-CoA species. Also able to isomerize both 3-cis and 3-trans double bonds into the 2-trans form in a range of enoyl-CoA species. Regulates the amount of medium-chain dicarboxylic fatty acids which are essential regulators of all fatty acid oxidation pathways. Also involved in the degradation of long-chain dicarboxylic acids through peroxisomal beta-oxidation. The protein is Peroxisomal bifunctional enzyme of Rattus norvegicus (Rat).